Consider the following 314-residue polypeptide: tRNA dimethylallyltransferase (314 aa).

12-19 (GPTASGKT) serves as a coordination point for ATP. Substrate is bound at residue 14–19 (TASGKT). Interaction with substrate tRNA stretches follow at residues 37–40 (DSAQ) and 161–165 (QRIQR).

It belongs to the IPP transferase family. Monomer. It depends on Mg(2+) as a cofactor.

It carries out the reaction adenosine(37) in tRNA + dimethylallyl diphosphate = N(6)-dimethylallyladenosine(37) in tRNA + diphosphate. Catalyzes the transfer of a dimethylallyl group onto the adenine at position 37 in tRNAs that read codons beginning with uridine, leading to the formation of N6-(dimethylallyl)adenosine (i(6)A). This chain is tRNA dimethylallyltransferase, found in Nitrosococcus oceani (strain ATCC 19707 / BCRC 17464 / JCM 30415 / NCIMB 11848 / C-107).